The chain runs to 871 residues: Alanine--tRNA ligase (871 aa).

The Zn(2+) site is built by H561, H565, C665, and H669.

It belongs to the class-II aminoacyl-tRNA synthetase family. It depends on Zn(2+) as a cofactor.

It localises to the cytoplasm. The catalysed reaction is tRNA(Ala) + L-alanine + ATP = L-alanyl-tRNA(Ala) + AMP + diphosphate. Catalyzes the attachment of alanine to tRNA(Ala) in a two-step reaction: alanine is first activated by ATP to form Ala-AMP and then transferred to the acceptor end of tRNA(Ala). Also edits incorrectly charged Ser-tRNA(Ala) and Gly-tRNA(Ala) via its editing domain. The protein is Alanine--tRNA ligase of Dehalococcoides mccartyi (strain ATCC BAA-2266 / KCTC 15142 / 195) (Dehalococcoides ethenogenes (strain 195)).